Here is an 85-residue protein sequence, read N- to C-terminus: Small integral membrane protein 35 (85 aa).

A helical transmembrane segment spans residues 7–27 (ISTLGMILGVGLSLLLVSILG).

The protein resides in the membrane. This Mus musculus (Mouse) protein is Small integral membrane protein 35.